We begin with the raw amino-acid sequence, 1857 residues long: Fatty acid synthase subunit alpha (1857 aa).

Residues 96 to 132 (EEEPEATEPAPSATPAAPAAAPAAGAPPPPPSAGPAA) form a disordered region. Over residues 102–119 (TEPAPSATPAAPAAAPAA) the composition is skewed to low complexity. Residues 139 to 214 (VTAVDILRTL…ASMQATFNGQ (76 aa)) enclose the Carrier domain. Residue S174 is modified to O-(pantetheine 4'-phosphoryl)serine. The tract at residues 577 to 604 (QIIPQENGHSKKGGRSAAKRNTPTRPGK) is disordered. A beta-ketoacyl reductase region spans residues 648-845 (KNVLMTGAGA…GAVIGWTRGT (198 aa)). The 542-residue stretch at 1092–1633 (LQEIVIQEDL…QKGAQVIGIH (542 aa)) folds into the Ketosynthase family 3 (KS3) domain. Active-site for beta-ketoacyl synthase activity residues include C1275, H1518, and H1559. 3 residues coordinate Mg(2+): D1743, V1744, and E1745. Residues 1743 to 1745 (DVE), Y1769, S1779, 1788 to 1798 (EAVFKSLGVSS), 1812 to 1815 (VDAN), and 1842 to 1844 (ISH) contribute to the acetyl-CoA site. The Mg(2+) site is built by S1843 and H1844.

Belongs to the thiolase-like superfamily. Fungal fatty acid synthetase subunit alpha family. In terms of assembly, [Alpha(6)beta(6)] hexamers of two multifunctional subunits (alpha and beta).

It carries out the reaction acetyl-CoA + n malonyl-CoA + 2n NADPH + 4n H(+) = a long-chain-acyl-CoA + n CoA + n CO2 + 2n NADP(+).. The enzyme catalyses a fatty acyl-[ACP] + malonyl-[ACP] + H(+) = a 3-oxoacyl-[ACP] + holo-[ACP] + CO2. The catalysed reaction is a (3R)-hydroxyacyl-[ACP] + NADP(+) = a 3-oxoacyl-[ACP] + NADPH + H(+). Fatty acid synthetase catalyzes the formation of long-chain fatty acids from acetyl-CoA, malonyl-CoA and NADPH. The alpha subunit contains domains for: acyl carrier protein, 3-oxoacyl-[acyl-carrier-protein] reductase, and 3-oxoacyl-[acyl-carrier-protein] synthase. The sequence is that of Fatty acid synthase subunit alpha (FAS2) from Penicillium patulum (Penicillium griseofulvum).